The primary structure comprises 122 residues: C-C motif chemokine 9 (122 aa).

An N-terminal signal peptide occupies residues 1–21; that stretch reads MKPFHTALSFLILTTALGIWA. Disulfide bonds link cysteine 57–cysteine 80, cysteine 58–cysteine 96, and cysteine 67–cysteine 107.

It belongs to the intercrine beta (chemokine CC) family. The N-terminal is proteolytically cleaved by proteases associated with inflammatory responses. The processed forms CCL9(29-101), CCL9(30-101) and CCL9(31-101) exhibit increase in CCR1-mediated signaling and chemotaxis assays in vitro. In terms of tissue distribution, expressed mainly in the liver, lung, and the thymus, although some expression has been detected in a wide variety of tissues except brain.

Its subcellular location is the secreted. Monokine with inflammatory, pyrogenic and chemokinetic properties. Circulates at high concentrations in the blood of healthy animals. Binding to a high-affinity receptor activates calcium release in neutrophils. It also inhibits colony formation of bone marrow myeloid immature progenitors. In Mus musculus (Mouse), this protein is C-C motif chemokine 9 (Ccl9).